A 450-amino-acid polypeptide reads, in one-letter code: Glucose-6-phosphate isomerase (450 aa).

A Phosphothreonine modification is found at Thr-39. Glu-291 serves as the catalytic Proton donor. Catalysis depends on residues His-312 and Lys-426.

The protein belongs to the GPI family.

The protein resides in the cytoplasm. The enzyme catalyses alpha-D-glucose 6-phosphate = beta-D-fructose 6-phosphate. Its pathway is carbohydrate biosynthesis; gluconeogenesis. The protein operates within carbohydrate degradation; glycolysis; D-glyceraldehyde 3-phosphate and glycerone phosphate from D-glucose: step 2/4. Functionally, catalyzes the reversible isomerization of glucose-6-phosphate to fructose-6-phosphate. The polypeptide is Glucose-6-phosphate isomerase (Bacillus thuringiensis (strain Al Hakam)).